Reading from the N-terminus, the 91-residue chain is DNA-directed RNA polymerase subunit omega (91 aa).

The protein belongs to the RNA polymerase subunit omega family. In terms of assembly, the RNAP catalytic core consists of 2 alpha, 1 beta, 1 beta' and 1 omega subunit. When a sigma factor is associated with the core the holoenzyme is formed, which can initiate transcription.

The catalysed reaction is RNA(n) + a ribonucleoside 5'-triphosphate = RNA(n+1) + diphosphate. Functionally, promotes RNA polymerase assembly. Latches the N- and C-terminal regions of the beta' subunit thereby facilitating its interaction with the beta and alpha subunits. This is DNA-directed RNA polymerase subunit omega from Syntrophus aciditrophicus (strain SB).